A 436-amino-acid chain; its full sequence is Chromosomal replication initiator protein DnaA (436 aa).

The tract at residues 1–80 (MSHEAVWQHV…QAPRFELRVV (80 aa)) is domain I, interacts with DnaA modulators. Positions 80–100 (VPGVVVQEDIFQAAPAEAPRP) are domain II. Positions 101 to 317 (KLNPKYTFEN…GALMRAIAFA (217 aa)) are domain III, AAA+ region. Residues Gly145, Gly147, Lys148, and Thr149 each contribute to the ATP site. A domain IV, binds dsDNA region spans residues 318-436 (SLNGVELTRA…LLRTLREACT (119 aa)).

Belongs to the DnaA family. In terms of assembly, oligomerizes as a right-handed, spiral filament on DNA at oriC.

Its subcellular location is the cytoplasm. It carries out the reaction ATP + H2O = ADP + phosphate + H(+). Functionally, plays an essential role in the initiation and regulation of chromosomal replication. ATP-DnaA binds to the origin of replication (oriC) to initiate formation of the DNA replication initiation complex once per cell cycle. Binds the DnaA box (a 9 base pair repeat at the origin) and separates the double-stranded (ds)DNA. Forms a right-handed helical filament on oriC DNA; dsDNA binds to the exterior of the filament while single-stranded (ss)DNA is stabiized in the filament's interior. The ATP-DnaA-oriC complex binds and stabilizes one strand of the AT-rich DNA unwinding element (DUE), permitting loading of DNA polymerase. After initiation quickly degrades to an ADP-DnaA complex that is not apt for DNA replication. Binds acidic phospholipids. In terms of biological role, the DnaA box consensus is 5'-TTATC[CA]A[CA]A-3' in this bacterium; oriC consists of 13 clustered DnaA boxes and a 40 base pair AT-rich region. ATP-DnaA binds cooperatively to multiple DnaA boxes, while ADP-DnaA binds with low cooperativity to the individual DnaA boxes. About 16-18 DnaA protein molecules bind their sites in oriC. Has a slow ATPase activity. Binds linear and supercoiled DNA. This Thermus thermophilus (strain ATCC 27634 / DSM 579 / HB8) protein is Chromosomal replication initiator protein DnaA.